A 238-amino-acid polypeptide reads, in one-letter code: IIGGDECNINEHRFLVALYTPRSRTLFCGGTLINQEWVLTAAHCDRKNFRIKLGMHSKKVPNKDEQTRVPKEKFFCLSSKNYTLWDKDIMLIRLDSPVKNSTHIEPFSLPSSPPSVGSVCRIMGWGRISPTEETFPDVPHCVNINLLEYEMCRAPYPEFELPATSRTLCAGILEGGKDTCRGDSGGPLICNGQFQGIASWGDDPCAQPHKPAAYTKVFDHLDWIKSIIAGNTDASCPP.

One can recognise a Peptidase S1 domain in the interval 1 to 229 (IIGGDECNIN…HLDWIKSIIA (229 aa)). Disulfide bonds link C7–C141, C28–C44, C76–C236, C120–C190, C152–C169, and C180–C205. The active-site Charge relay system is the H43. N-linked (GlcNAc...) asparagine glycosylation occurs at N81. Residue D88 is the Charge relay system of the active site. The N-linked (GlcNAc...) asparagine glycan is linked to N100. S184 acts as the Charge relay system in catalysis.

The protein belongs to the peptidase S1 family. Snake venom subfamily. In terms of assembly, monomer. Expressed by the venom gland.

It is found in the secreted. With respect to regulation, inhibited by diisopropylfluorophosphate (DFP), PMSF and leupeptin. Thrombin-like snake venom serine protease. Cleaves fibrinogen (beta chain of fibrinogen (FGB) and more slowly alpha chain (FGA)) without inducing fibrin clotting and cleaves kininogen to produce bradykinin (KNG), resulting in the reduction of blood pressure. The polypeptide is Thrombin-like enzyme halystase (Gloydius blomhoffii (Mamushi)).